We begin with the raw amino-acid sequence, 466 residues long: MKLFNTMTRQKEEFKPIKDGEVSMYVCGPTVYNYFHIGNGRTFLVFDTIRRYFEYRGYKVNFIQNFTDIDDKMIKKANEENITVKELGDRFIHEYYKDADGLNIKRATANPRATEYMDEIIQFVKDLIDKGYAYEVNGDVYFSTKQFKEYGKLSGQNLDDLQAGARISVDERKKDPMDFAIWKSEKPGEPSWNCPWGKGRPGWHIECSCMAHKLLGDTIDIHAGGADLVFPHHENEIAQSEARNGKTFANYWMHSAYLNINNKKMSKSLNNFFTTREILEKYDAEVIRLFMLSAHYRTPLNFSDDLLQSAKASNERLYNAIGNLERLLDEVKVDKVTENEKEYVKNLESYKEKYIEKMDDDFNTADAISVIFDLVKDINTNINTESSKELVEYSLELIRELGKPLGILQKSTMLDLNAEIEKLIEQRQQARKDKDWALADKIRDDLKARGIVLEDTPQGVRWKREQ.

Position 27 (cysteine 27) interacts with Zn(2+). The 'HIGH' region signature appears at 29 to 39 (PTVYNYFHIGN). Zn(2+)-binding residues include cysteine 207, histidine 232, and glutamate 236. The 'KMSKS' region signature appears at 264 to 268 (KMSKS). Lysine 267 contacts ATP.

Belongs to the class-I aminoacyl-tRNA synthetase family. In terms of assembly, monomer. The cofactor is Zn(2+).

It is found in the cytoplasm. It carries out the reaction tRNA(Cys) + L-cysteine + ATP = L-cysteinyl-tRNA(Cys) + AMP + diphosphate. This is Cysteine--tRNA ligase from Clostridium novyi (strain NT).